Consider the following 202-residue polypeptide: Small ribosomal subunit protein uS4c (202 aa).

An S4 RNA-binding domain is found at 90–153; that stretch reads MRLDNVTFRL…KSETIISKNI (64 aa).

This sequence belongs to the universal ribosomal protein uS4 family. Part of the 30S ribosomal subunit. Contacts protein S5. The interaction surface between S4 and S5 is involved in control of translational fidelity.

The protein localises to the plastid. Its subcellular location is the chloroplast. Its function is as follows. One of the primary rRNA binding proteins, it binds directly to 16S rRNA where it nucleates assembly of the body of the 30S subunit. Functionally, with S5 and S12 plays an important role in translational accuracy. The polypeptide is Small ribosomal subunit protein uS4c (rps4) (Hypnum cupressiforme (Cypress-leaved plait-moss)).